The primary structure comprises 1078 residues: Lon protease homolog, mitochondrial (1078 aa).

The N-terminal 27 residues, 1 to 27 (MIKASKCNKPRALFLVRVSIPRTFIRN), are a transit peptide targeting the mitochondrion. The segment covering 71–123 (SEKEKQPSTDKSNDKDKPSRKEKGKDKEKENEEKKDINMDEKYEINEETDTKP) has biased composition (basic and acidic residues). The interval 71–179 (SEKEKQPSTD…KEFLSPSDSG (109 aa)) is disordered. The segment covering 127–157 (PNNPVSSKSNISSSSGGDNNNNNNNNNNNND) has biased composition (low complexity). Residues 158–172 (SDGKNDDGSPKDKEF) are compositionally biased toward basic and acidic residues. Positions 182–400 (PPFLAIAMKD…LSLQLLQVEA (219 aa)) constitute a Lon N-terminal domain. 548-555 (GPPGTGKT) contributes to the ATP binding site. Residues 792–825 (NSPIEYIQSNTEVKAETTTESQQEQEKEKEKDEE) form a disordered region. Basic and acidic residues predominate over residues 815-825 (EQEKEKEKDEE). Residues 861–1049 (TLNPGVATGL…SEVFEHLFQG (189 aa)) form the Lon proteolytic domain. Catalysis depends on residues Ser955 and Lys998.

This sequence belongs to the peptidase S16 family. In terms of assembly, homohexamer or homoheptamer. Organized in a ring with a central cavity.

Its subcellular location is the mitochondrion matrix. It catalyses the reaction Hydrolysis of proteins in presence of ATP.. Its function is as follows. ATP-dependent serine protease that mediates the selective degradation of misfolded, unassembled or oxidatively damaged polypeptides as well as certain short-lived regulatory proteins in the mitochondrial matrix. May also have a chaperone function in the assembly of inner membrane protein complexes. Participates in the regulation of mitochondrial gene expression and in the maintenance of the integrity of the mitochondrial genome. Binds to mitochondrial DNA in a site-specific manner. The protein is Lon protease homolog, mitochondrial of Candida albicans (strain SC5314 / ATCC MYA-2876) (Yeast).